Reading from the N-terminus, the 1111-residue chain is Receptor-type guanylate cyclase gcy-14 (1111 aa).

An N-terminal signal peptide occupies residues 1–14 (MCLFLLLFPYLASG). The Extracellular segment spans residues 15 to 473 (QFLQTVKVGL…ECPPDFVKEY (459 aa)). 6 N-linked (GlcNAc...) asparagine glycosylation sites follow: Asn-65, Asn-130, Asn-318, Asn-340, Asn-365, and Asn-379. The helical transmembrane segment at 474 to 494 (LVYTIIAAVIVVLALLAGCAG) threads the bilayer. A Protein kinase domain is found at 482–817 (VIVVLALLAG…KSNLMDHVFN (336 aa)). ATP-binding positions include 488 to 496 (LLAGCAGLL) and Lys-545. The Cytoplasmic portion of the chain corresponds to 495-1111 (LLYTMQMKRK…DFNNGNECVS (617 aa)). The region spanning 875–1005 (TIFFSDVVQF…DAVNTASRME (131 aa)) is the Guanylate cyclase domain. A disordered region spans residues 1061–1082 (SAQAPREKTPEPPRRQSVRSIS). Residues 1065-1074 (PREKTPEPPR) show a composition bias toward basic and acidic residues.

It belongs to the adenylyl cyclase class-4/guanylyl cyclase family. Homodimer. In terms of tissue distribution, expressed asymmetrically in ASEL sensory neuron.

It localises to the cell membrane. It is found in the cell projection. The protein localises to the cilium. The catalysed reaction is GTP = 3',5'-cyclic GMP + diphosphate. Functionally, guanylate cyclase involved in the production of the second messenger cGMP. Regulates chemotaxis responses toward Na(1+) and Li(1+) salt ions and alkaline pH in ASE left (ASEL) sensory neuron. Directly senses environmental alkalinity in ASEL neuron which probably leads to the activation of cGMP-gated cation channel tax2/tax4. This is Receptor-type guanylate cyclase gcy-14 from Caenorhabditis elegans.